We begin with the raw amino-acid sequence, 626 residues long: MAIEGEKKKDPRAWDALTPSLAEWVLDAISSMGFEKMTPVQASTIPLFMGNKDVVVEAVTGSGKTLSFLIPVVEKLLRLEEPLKKHHVGAIIVSPTRELATQIHSVLTSLLKFHEPSAEALQPLEEGEKRKPSSTLRVIPQLLLGGTTTPAQDLSRFLKNSPNLLISTPGRLLELLSSPHVHCPQSSFEVLVLDEADRLLDLGFKDDLQKILGRLPKQRRTGLFSASVSEAVGEIVRVGLRNPVKIAVKVKGAGGGDKMTPASLQMSYLLTPPTHKFPALLSLLSQLEPTPQKSIIYLSTCAAVDYFQPLLEAVLPKQFGLVSLHGKHPPNVRQRNFSKYVAAVSPTILLTTDVAARGLDIPQVDLVVQIDPPSDPKVFLHRCGRAGRAGRKGLSVIFLQPGREEDYIPFLEIRKTPITPLKRPEISTTGEAAKILISKMRKEVLSDRALYDKGQRAFVSWVQAYSKHQASSIFRVADLDWTDLGNAWALVRLPKMPELKKWEGDKTLGIKLDMSEYAYKDKIREKARRVAMEEAKNAGPYVPTEEQIAKKKQREAWSQKHEKQDLKELKREKKKRKREIERLEKMTDEEKKEEQAKEKELQDLIEQVKKRKIEDDADVEFEGFAD.

The Q motif signature appears at 14–42 (WDALTPSLAEWVLDAISSMGFEKMTPVQA). The region spanning 45-246 (IPLFMGNKDV…RVGLRNPVKI (202 aa)) is the Helicase ATP-binding domain. 58–65 (AVTGSGKT) is an ATP binding site. The short motif at 194-197 (DEAD) is the DEAD box element. The Helicase C-terminal domain maps to 279-437 (ALLSLLSQLE…TTGEAAKILI (159 aa)). Residues 553–599 (QREAWSQKHEKQDLKELKREKKKRKREIERLEKMTDEEKKEEQAKEK) are disordered. Composition is skewed to basic and acidic residues over residues 554–571 (REAW…ELKR) and 578–599 (REIE…AKEK). Residues 558–620 (SQKHEKQDLK…RKIEDDADVE (63 aa)) are a coiled coil.

The protein belongs to the DEAD box helicase family. DDX55/SPB4 subfamily. As to quaternary structure, component of pre-60S ribosomal complexes.

It is found in the nucleus. The protein resides in the nucleolus. It catalyses the reaction ATP + H2O = ADP + phosphate + H(+). ATP-binding RNA helicase involved in the biogenesis of 60S ribosomal subunits. Binds 90S pre-ribosomal particles and dissociates from pre-60S ribosomal particles after processing of 27SB pre-rRNA. Required for the normal formation of 18S rRNA through the processing of pre-rRNAs at sites A0, A1 and A2, and the normal formation of 25S and 5.8S rRNAs through the processing of pre-rRNAs at sites C1 and C2. This is ATP-dependent rRNA helicase spb4 from Botryotinia fuckeliana (strain B05.10) (Noble rot fungus).